A 259-amino-acid polypeptide reads, in one-letter code: MQQMVPASGYDRAITIFSPEGRLYQVEYAREAVRRGTTAVGIKCKDGVVLAVDRRITSKLIDVSSIEKIFQIDDHIVAATSGLVADARVLIDRARVEAQVNRISYGEAITVEALAKKICDIKQAYTHHGGARPFGLALLITGIDRHSARLFETDPSGALIEYKATAIGSGRPVAMEILEEKYDENMSVSEGMELAIYALSKTTEELKPENIDMAIVKDTGKLVEKITVFEIEKIVKKVYDKIKVENEEAEKKKATENIE.

Belongs to the peptidase T1A family. As to quaternary structure, the 20S proteasome core is composed of 14 alpha and 14 beta subunits that assemble into four stacked heptameric rings, resulting in a barrel-shaped structure. The two inner rings, each composed of seven catalytic beta subunits, are sandwiched by two outer rings, each composed of seven alpha subunits. The catalytic chamber with the active sites is on the inside of the barrel. Has a gated structure, the ends of the cylinder being occluded by the N-termini of the alpha-subunits. Is capped at one or both ends by the proteasome regulatory ATPase, PAN.

Its subcellular location is the cytoplasm. The formation of the proteasomal ATPase PAN-20S proteasome complex, via the docking of the C-termini of PAN into the intersubunit pockets in the alpha-rings, triggers opening of the gate for substrate entry. Interconversion between the open-gate and close-gate conformations leads to a dynamic regulation of the 20S proteasome proteolysis activity. Component of the proteasome core, a large protease complex with broad specificity involved in protein degradation. This is Proteasome subunit alpha from Methanococcus vannielii (strain ATCC 35089 / DSM 1224 / JCM 13029 / OCM 148 / SB).